The sequence spans 98 residues: Integration host factor subunit alpha (98 aa).

A disordered region spans residues 52–73 (FDLRQKSERPGRNPKTGEDIPI). Basic and acidic residues predominate over residues 54–73 (LRQKSERPGRNPKTGEDIPI).

Belongs to the bacterial histone-like protein family. In terms of assembly, heterodimer of an alpha and a beta chain.

In terms of biological role, this protein is one of the two subunits of integration host factor, a specific DNA-binding protein that functions in genetic recombination as well as in transcriptional and translational control. The polypeptide is Integration host factor subunit alpha (Pseudoalteromonas atlantica (strain T6c / ATCC BAA-1087)).